The primary structure comprises 152 residues: Lipoprotein signal peptidase (152 aa).

The next 3 membrane-spanning stretches (helical) occupy residues 5-25, 61-81, and 84-104; these read LFVL…FWIV, WFFV…LATH, and LNIW…GNFI. Active-site residues include D114 and D130. The chain crosses the membrane as a helical span at residues 125–145; the sequence is IFNVADSYLTVGVILLLICLW.

The protein belongs to the peptidase A8 family.

Its subcellular location is the cell membrane. The enzyme catalyses Release of signal peptides from bacterial membrane prolipoproteins. Hydrolyzes -Xaa-Yaa-Zaa-|-(S,diacylglyceryl)Cys-, in which Xaa is hydrophobic (preferably Leu), and Yaa (Ala or Ser) and Zaa (Gly or Ala) have small, neutral side chains.. It functions in the pathway protein modification; lipoprotein biosynthesis (signal peptide cleavage). Functionally, this protein specifically catalyzes the removal of signal peptides from prolipoproteins. This is Lipoprotein signal peptidase from Streptococcus pyogenes serotype M1.